Here is a 341-residue protein sequence, read N- to C-terminus: Phosphate acyltransferase (341 aa).

Belongs to the PlsX family. Homodimer. Probably interacts with PlsY.

The protein resides in the cytoplasm. It carries out the reaction a fatty acyl-[ACP] + phosphate = an acyl phosphate + holo-[ACP]. Its pathway is lipid metabolism; phospholipid metabolism. In terms of biological role, catalyzes the reversible formation of acyl-phosphate (acyl-PO(4)) from acyl-[acyl-carrier-protein] (acyl-ACP). This enzyme utilizes acyl-ACP as fatty acyl donor, but not acyl-CoA. The polypeptide is Phosphate acyltransferase (Vibrio parahaemolyticus serotype O3:K6 (strain RIMD 2210633)).